A 46-amino-acid polypeptide reads, in one-letter code: Large ribosomal subunit protein bL36 (46 aa).

It belongs to the bacterial ribosomal protein bL36 family.

In Serratia proteamaculans (strain 568), this protein is Large ribosomal subunit protein bL36.